Reading from the N-terminus, the 64-residue chain is Large ribosomal subunit protein uL29 (64 aa).

Belongs to the universal ribosomal protein uL29 family.

This is Large ribosomal subunit protein uL29 from Nitrosomonas europaea (strain ATCC 19718 / CIP 103999 / KCTC 2705 / NBRC 14298).